The sequence spans 576 residues: MDPGAGSDSSLTVNEQVIVMSGHETIRVLEVGVDAQLPAEEESKGLESVAAGGSQSGGPVEASGPAEAGSCDPDHSAEATVAARSPSESCPSDCHLQPSPEPASGITDPDAAGCTSCPPGQVAGQQGLAVWTIPTATVAALPGLTAASPTGGTFKPPLAGLQAAAVLNTALPTPVQAAPPIQASSPAQPRPPAQPQPLFQTQPLLQTTPAILPQPTAATVAAPTPKTVDATPQITVQPAGFAFSPGIISAASLGGQTQILGSLTTAPVITNTIPSMPGISSQILTNAQGQVIGALPWVVNSASVATPAPAQSLQVQAVTPQLLLNAQGQVIATLASSPLPQPVAVRKPNTPESPAKSEVQPIQPTQAVPQPAVILTSPTPALKPSAATPIPITCSETPTVSQLVSKPHTPSLDEDGINLEEIREFAKNFKIRRLSLGLTQTQVGQALTATEGPAYSQSAICRFEKLDITPKSAQKLKPVLEKWLMEAELRNQEGQQNLMEFVGGEPSKKRKRRTSFTPQAIEALNAYFEKNPLPTGQEITEIAKELNYDREVVRVWFCNRRQTLKNTSKLNVFQIP.

Residues 65–88 (PAEAGSCDPDHSAEATVAARSPSE) are disordered. Residues 414–488 (EDGINLEEIR…VLEKWLMEAE (75 aa)) form the POU-specific domain. A DNA-binding region (homeobox) is located at residues 509–568 (KRKRRTSFTPQAIEALNAYFEKNPLPTGQEITEIAKELNYDREVVRVWFCNRRQTLKNTS).

It belongs to the POU transcription factor family. Class-6 subfamily. Isoform C1 and isoform C2 are found in the brain, while isoform C7 is found in the testis.

The protein localises to the nucleus. Transcription factor that binds preferentially to a variant of the octamer motif (5'-ATGATAAT-3'). The protein is POU domain, class 6, transcription factor 1 (Pou6f1) of Mus musculus (Mouse).